We begin with the raw amino-acid sequence, 121 residues long: Mediator of RNA polymerase II transcription subunit 22 (121 aa).

Belongs to the Mediator complex subunit 22 family. As to quaternary structure, component of the Mediator complex.

It localises to the nucleus. Functionally, component of the Mediator complex, a coactivator involved in the regulated transcription of nearly all RNA polymerase II-dependent genes. Mediator functions as a bridge to convey information from gene-specific regulatory proteins to the basal RNA polymerase II transcription machinery. Mediator is recruited to promoters by direct interactions with regulatory proteins and serves as a scaffold for the assembly of a functional preinitiation complex with RNA polymerase II and the general transcription factors. The protein is Mediator of RNA polymerase II transcription subunit 22 (SRB6) of Eremothecium gossypii (strain ATCC 10895 / CBS 109.51 / FGSC 9923 / NRRL Y-1056) (Yeast).